Consider the following 165-residue polypeptide: Protein AIG2 C (165 aa).

Residue 14–19 (YGSILE) participates in substrate binding. Residue glutamate 82 is the Proton acceptor of the active site.

It belongs to the gamma-glutamylcyclotransferase family. As to expression, expressed in floral organs, leaves, stems and roots.

Its function is as follows. Putative gamma-glutamylcyclotransferase. The polypeptide is Protein AIG2 C (Arabidopsis thaliana (Mouse-ear cress)).